An 81-amino-acid polypeptide reads, in one-letter code: Photosystem I iron-sulfur center (81 aa).

2 consecutive 4Fe-4S ferredoxin-type domains span residues 2–31 (SHTV…MVPW) and 39–68 (IASS…IRVY). [4Fe-4S] cluster is bound by residues Cys11, Cys14, Cys17, Cys21, Cys48, Cys51, Cys54, and Cys58.

As to quaternary structure, the cyanobacterial PSI reaction center is composed of one copy each of PsaA,B,C,D,E,F,I,J,K,L,M and X, and forms trimeric complexes. [4Fe-4S] cluster serves as cofactor.

It is found in the cellular thylakoid membrane. It catalyses the reaction reduced [plastocyanin] + hnu + oxidized [2Fe-2S]-[ferredoxin] = oxidized [plastocyanin] + reduced [2Fe-2S]-[ferredoxin]. Apoprotein for the two 4Fe-4S centers FA and FB of photosystem I (PSI); essential for photochemical activity. FB is the terminal electron acceptor of PSI, donating electrons to ferredoxin. The C-terminus interacts with PsaA/B/D and helps assemble the protein into the PSI complex. Required for binding of PsaD and PsaE to PSI. PSI is a plastocyanin/cytochrome c6-ferredoxin oxidoreductase, converting photonic excitation into a charge separation, which transfers an electron from the donor P700 chlorophyll pair to the spectroscopically characterized acceptors A0, A1, FX, FA and FB in turn. This is Photosystem I iron-sulfur center from Microchaete diplosiphon (Fremyella diplosiphon).